A 780-amino-acid chain; its full sequence is Myosin heavy chain kinase C (780 aa).

Positions 40-243 constitute an Alpha-type protein kinase domain; it reads IGDDLKPKWT…VCDFLKLKPI (204 aa). Positions 310-495 are disordered; the sequence is RIRAQQQQKS…MEQTPDRSEF (186 aa). A compositionally biased stretch (low complexity) spans 337–350; that stretch reads QQSPSSPTSKPVPQ. A compositionally biased stretch (polar residues) spans 353-376; it reads KTPSQSNVVNKSPVSPPKENSNVK. The span at 380 to 436 shows a compositional bias: low complexity; it reads DNINNNNSSISSNNDNSNNNNNNNDNINNSSNSSSVNSNSSSVSSSSSSSSSSSSSS. Residues 437–450 show a composition bias toward polar residues; it reads TTNAAPISIQVSRN. Positions 458–488 are enriched in low complexity; it reads IQPSSAAASASSTSSSNVPTPESTSTSSMEQ. WD repeat units follow at residues 507–546, 549–589, 591–628, 631–668, 671–708, and 748–780; these read DTVRGLQSECITGDSLRLYSGSNDGQIGVWDAVELKHVTN, AHGK…TIKE, KESNEVNTIFIQDNLLYTGCNDKTVKVWDMRSYECVKT, GHTRAIKSVCAMGNLLFSGSNDQQIYVWNLATGTILTN, GHEGWVKTLYAHNNMLYSGSHDETIRIWDLKTTRCVNT, and NTRSSILCLWRNQNQLFTGSLASNLKVWSWDKM.

This sequence belongs to the protein kinase superfamily. Alpha-type protein kinase family. ALPK subfamily. In terms of assembly, interacts with myosin II heavy chain (mhcA). In terms of processing, autophosphorylated in vitro.

Its subcellular location is the cytoplasm. It is found in the cell cortex. The protein resides in the membrane. It localises to the cleavage furrow. The catalysed reaction is L-threonyl-[myosin heavy-chain] + ATP = O-phospho-L-threonyl-[myosin heavy-chain] + ADP + H(+). Functionally, phosphorylates threonine at 'Thr-1823', 'Thr-1833' and 'Thr-2029' in the C-terminal tail region of myosin II heavy chain (mhcA). This phosphorylation is critical in actin-activated ATPase activity of the myosin and regulating the assembly and disassembly of myosin II filament. In vitro, catalytic domain phosphorylates mhcA, myelin basic protein, myosin regulatory light chain, casein and caldesmon. Drives the disassembly of myosin II filaments for efficient cytokinesis and recycling of myosin II that occurs during late cytokinesis. Can be activated in vitro by autophosphorylation. This is Myosin heavy chain kinase C (mhkC) from Dictyostelium discoideum (Social amoeba).